Consider the following 135-residue polypeptide: Small ribosomal subunit protein uS12 (135 aa).

Residues 1 to 29 (MPTINQLVRKGREKVEKKSKAPALQGNPQ) are disordered. Asp89 is subject to 3-methylthioaspartic acid. The disordered stretch occupies residues 106-135 (GVKDRKQSRSKYGAKRPKPGQAAATTGKKK). Basic residues predominate over residues 113 to 123 (SRSKYGAKRPK).

This sequence belongs to the universal ribosomal protein uS12 family. Part of the 30S ribosomal subunit. Contacts proteins S8 and S17. May interact with IF1 in the 30S initiation complex.

Functionally, with S4 and S5 plays an important role in translational accuracy. Its function is as follows. Interacts with and stabilizes bases of the 16S rRNA that are involved in tRNA selection in the A site and with the mRNA backbone. Located at the interface of the 30S and 50S subunits, it traverses the body of the 30S subunit contacting proteins on the other side and probably holding the rRNA structure together. The combined cluster of proteins S8, S12 and S17 appears to hold together the shoulder and platform of the 30S subunit. This is Small ribosomal subunit protein uS12 from Sulfurihydrogenibium sp. (strain YO3AOP1).